The chain runs to 266 residues: Mediator of RNA polymerase II transcription subunit 18 (266 aa).

It belongs to the Mediator complex subunit 18 family. In terms of assembly, component of the Mediator complex.

Its subcellular location is the nucleus. Its function is as follows. Component of the Mediator complex, a coactivator involved in the regulated transcription of nearly all RNA polymerase II-dependent genes. Mediator functions as a bridge to convey information from gene-specific regulatory proteins to the basal RNA polymerase II transcription machinery. Mediator is recruited to promoters by direct interactions with regulatory proteins and serves as a scaffold for the assembly of a functional preinitiation complex with RNA polymerase II and the general transcription factors. The sequence is that of Mediator of RNA polymerase II transcription subunit 18 (SRB5) from Candida glabrata (strain ATCC 2001 / BCRC 20586 / JCM 3761 / NBRC 0622 / NRRL Y-65 / CBS 138) (Yeast).